The sequence spans 64 residues: Temporin-ALg (64 aa).

The signal sequence occupies residues 1–22 (MFTLKKSLLLLFFLGTINLSLC). Positions 23 to 46 (EQERNAEEERRDDLGERQAEVEKR) are excised as a propeptide. L62 is subject to Leucine amide.

The protein belongs to the frog skin active peptide (FSAP) family. Temporin subfamily. Expressed by the skin glands.

It is found in the secreted. Its function is as follows. Antimicrobial peptide with activity against Gram-positive and Gram-negative bacteria and against fungi. Has been tested against S.aureus (MIC=2.5 ug/mL), B.pumilus (MIC=2.5 ug/mL), B.cereus (MIC=30.0 ug/mL), E.coli (MIC=5.0 ug/mL), B.dysenteriae (MIC=10.0 ug/mL), A.cacoaceticus (MIC=30.0 ug/mL), P.aeruginosa (MIC=7.5 ug/mL) and C.albicans (MIC=1.25 ug/mL). Also shows a weak hemolytic activity. This chain is Temporin-ALg, found in Amolops loloensis (Lolokou Sucker Frog).